The following is a 210-amino-acid chain: Putative truncated L-serine dehydratase SDL1 (210 aa).

Belongs to the serine/threonine dehydratase family. Pyridoxal 5'-phosphate is required as a cofactor.

The protein localises to the cytoplasm. The catalysed reaction is L-serine = pyruvate + NH4(+). Its pathway is carbohydrate biosynthesis; gluconeogenesis. The sequence is that of Putative truncated L-serine dehydratase SDL1 (SDL1) from Saccharomyces cerevisiae (strain ATCC 204508 / S288c) (Baker's yeast).